The sequence spans 415 residues: Gamma-glutamyl phosphate reductase (415 aa).

Belongs to the gamma-glutamyl phosphate reductase family.

It is found in the cytoplasm. It carries out the reaction L-glutamate 5-semialdehyde + phosphate + NADP(+) = L-glutamyl 5-phosphate + NADPH + H(+). It functions in the pathway amino-acid biosynthesis; L-proline biosynthesis; L-glutamate 5-semialdehyde from L-glutamate: step 2/2. Its function is as follows. Catalyzes the NADPH-dependent reduction of L-glutamate 5-phosphate into L-glutamate 5-semialdehyde and phosphate. The product spontaneously undergoes cyclization to form 1-pyrroline-5-carboxylate. The polypeptide is Gamma-glutamyl phosphate reductase (Bacillus subtilis (strain 168)).